Consider the following 24-residue polypeptide: Cytochrome c oxidase subunit 7A2, mitochondrial (24 aa).

Residues 1-13 (FENKVPEKQKLFQ) show a composition bias toward basic and acidic residues. A disordered region spans residues 1 to 24 (FENKVPEKQKLFQEDNGIPVHLKG). Lys10 carries the N6-acetyllysine modification.

This sequence belongs to the cytochrome c oxidase VIIa family. In terms of assembly, component of the cytochrome c oxidase (complex IV, CIV), a multisubunit enzyme composed of 14 subunits. The complex is composed of a catalytic core of 3 subunits MT-CO1, MT-CO2 and MT-CO3, encoded in the mitochondrial DNA, and 11 supernumerary subunits COX4I, COX5A, COX5B, COX6A, COX6B, COX6C, COX7A, COX7B, COX7C, COX8 and NDUFA4, which are encoded in the nuclear genome. The complex exists as a monomer or a dimer and forms supercomplexes (SCs) in the inner mitochondrial membrane with NADH-ubiquinone oxidoreductase (complex I, CI) and ubiquinol-cytochrome c oxidoreductase (cytochrome b-c1 complex, complex III, CIII), resulting in different assemblies (supercomplex SCI(1)III(2)IV(1) and megacomplex MCI(2)III(2)IV(2)). Interacts with PET100.

It is found in the mitochondrion inner membrane. It functions in the pathway energy metabolism; oxidative phosphorylation. Functionally, component of the cytochrome c oxidase, the last enzyme in the mitochondrial electron transport chain which drives oxidative phosphorylation. The respiratory chain contains 3 multisubunit complexes succinate dehydrogenase (complex II, CII), ubiquinol-cytochrome c oxidoreductase (cytochrome b-c1 complex, complex III, CIII) and cytochrome c oxidase (complex IV, CIV), that cooperate to transfer electrons derived from NADH and succinate to molecular oxygen, creating an electrochemical gradient over the inner membrane that drives transmembrane transport and the ATP synthase. Cytochrome c oxidase is the component of the respiratory chain that catalyzes the reduction of oxygen to water. Electrons originating from reduced cytochrome c in the intermembrane space (IMS) are transferred via the dinuclear copper A center (CU(A)) of subunit 2 and heme A of subunit 1 to the active site in subunit 1, a binuclear center (BNC) formed by heme A3 and copper B (CU(B)). The BNC reduces molecular oxygen to 2 water molecules using 4 electrons from cytochrome c in the IMS and 4 protons from the mitochondrial matrix. This Ovis aries (Sheep) protein is Cytochrome c oxidase subunit 7A2, mitochondrial (COX7A2).